A 106-amino-acid chain; its full sequence is Small ribosomal subunit protein uS10 (106 aa).

Belongs to the universal ribosomal protein uS10 family. Part of the 30S ribosomal subunit.

Involved in the binding of tRNA to the ribosomes. This Synechococcus sp. (strain WH7803) protein is Small ribosomal subunit protein uS10.